Reading from the N-terminus, the 191-residue chain is Heme-binding protein 1 (191 aa).

It belongs to the HEBP family. Monomer.

It localises to the cytoplasm. Its function is as follows. May bind free porphyrinogens that may be present in the cell and thus facilitate removal of these potentially toxic compound. Binds with a high affinity to one molecule of heme or porphyrins. It binds metalloporphyrins, free porphyrins and N-methylprotoporphyrin with similar affinities. The chain is Heme-binding protein 1 (HEBP1) from Bos taurus (Bovine).